Here is a 316-residue protein sequence, read N- to C-terminus: Glutathione synthetase (316 aa).

Residues 125–311 (KLFTAWFPEL…ITGMLMNAIE (187 aa)) enclose the ATP-grasp domain. 151–207 (HQKHGDVIFKPLDGMGGASIFRLKKDDPNVGVIIETLTEHGNRFCMAQNFLPAIKEG) serves as a coordination point for ATP. Glu281 and Asn283 together coordinate Mg(2+).

The protein belongs to the prokaryotic GSH synthase family. Mg(2+) serves as cofactor. It depends on Mn(2+) as a cofactor.

It carries out the reaction gamma-L-glutamyl-L-cysteine + glycine + ATP = glutathione + ADP + phosphate + H(+). The protein operates within sulfur metabolism; glutathione biosynthesis; glutathione from L-cysteine and L-glutamate: step 2/2. This Photorhabdus laumondii subsp. laumondii (strain DSM 15139 / CIP 105565 / TT01) (Photorhabdus luminescens subsp. laumondii) protein is Glutathione synthetase.